Here is a 373-residue protein sequence, read N- to C-terminus: NK1 transcription factor-related protein 1 (373 aa).

3 disordered regions span residues 49-74 (ALPA…TVHR), 149-231 (SDFT…RRAR), and 281-328 (KWKK…SMHT). Residues 53–63 (ESRETSPRHEP) are compositionally biased toward basic and acidic residues. Over residues 168-177 (EESSALTGNN) the composition is skewed to polar residues. A compositionally biased stretch (low complexity) spans 196-210 (GQQTQQSSSNGQNHQ). Residues 227-286 (PRRARTAFTYEQLVALENKFKSTRYLSVCERLNLALSLSLTETQVKIWFQNRRTKWKKQN) constitute a DNA-binding region (homeobox). Positions 296 to 310 (SGGGGGNGPSNGLGG) are enriched in gly residues.

The protein belongs to the NK-1 homeobox family.

Its subcellular location is the nucleus. In terms of biological role, may participate in the energy homeostasis regulation. This is NK1 transcription factor-related protein 1 from Danio rerio (Zebrafish).